A 237-amino-acid chain; its full sequence is UDP-Gal:alpha-D-GlcNAc-diphosphoundecaprenol beta-1,4-galactosyltransferase (237 aa).

Glu-101 serves as the catalytic Nucleophile.

The protein belongs to the glycosyltransferase 26 family. It depends on Mn(2+) as a cofactor. Ni(2+) serves as cofactor. Requires Pb(2+) as cofactor.

It catalyses the reaction N-acetyl-alpha-D-glucosaminyl-di-trans,octa-cis-undecaprenyl diphosphate + UDP-alpha-D-galactose = beta-D-Gal-(1-&gt;4)-alpha-D-GlcNAc-di-trans,octa-cis-undecaprenyl diphosphate + UDP + H(+). The protein operates within bacterial outer membrane biogenesis; LPS O-antigen biosynthesis. Galactosyltransferase that adds one galactose residue in the beta-1-4 linkage to GlcNAc-alpha-pyrophosphate-lipid in the biosynthesis of the O-polysaccharide repeating unit of the O antigen. This Shigella boydii protein is UDP-Gal:alpha-D-GlcNAc-diphosphoundecaprenol beta-1,4-galactosyltransferase (wfeD).